A 177-amino-acid chain; its full sequence is Large ribosomal subunit protein uL6 (177 aa).

Over residues 152–171 the composition is skewed to basic and acidic residues; the sequence is RPPEPYKGKGVRYDDEEVRR. Residues 152 to 177 are disordered; sequence RPPEPYKGKGVRYDDEEVRRKEAKKK.

It belongs to the universal ribosomal protein uL6 family. Part of the 50S ribosomal subunit.

Functionally, this protein binds to the 23S rRNA, and is important in its secondary structure. It is located near the subunit interface in the base of the L7/L12 stalk, and near the tRNA binding site of the peptidyltransferase center. The protein is Large ribosomal subunit protein uL6 of Shewanella putrefaciens (strain CN-32 / ATCC BAA-453).